Here is a 562-residue protein sequence, read N- to C-terminus: MNNDKRPLYIPYAGPALLATPLLNKGSAFSGEERSSFNLEGLLPETTETIQEQVERAYQQYKSFESDMDKHIYLRNIQDTNETLYYRLVQNHISEMMPIIYTPTVGAACENFSNIYRRGRGLFISYPNRDRIDDLLNNAANHNVKVIVVTDGERILGLGDQGIGGMGIPIGKLSLYTACGGISPAYTLPIVLDVGTNNPQRLADPMYMGWRHPRITGPDYDAFVEEFIQAVQRRWPDALIQFEDFAQKNAMPLLERYKDRICCFNDDIQGTAAVTVGSLLAACKAAGTKLSDQRITFLGAGSAGCGIAEAIIAQMVSEGISDEKARSQVYMVDRWGLLQEGMPNLLDFQQRLVQKFDNTKKWENEGNGFSLLDVMHNAKPTILIGVSGAPGLFSEEVIKEMHKHCKRPIVFPLSNPTSRVEATPNDIIRWTNGEALVATGSPFEPVVHEGRSYPIAQCNNSYIFPGIGLGVLAVNAKRVTDEMLMESSRALATCSPLAINGNGALLPPLEEIHLVSKKIAFAVAKKAIEQGVALEITDEALNDAIDQAFWQPVYRRYKRTAF.

The active-site Proton donor is tyrosine 101. Position 154 (arginine 154) interacts with NAD(+). Lysine 172 (proton acceptor) is an active-site residue. A divalent metal cation is bound by residues glutamate 243, aspartate 244, and aspartate 267. Aspartate 267 and asparagine 415 together coordinate NAD(+).

It belongs to the malic enzymes family. As to quaternary structure, homotetramer. The cofactor is Mg(2+). Mn(2+) is required as a cofactor.

The enzyme catalyses (S)-malate + NAD(+) = pyruvate + CO2 + NADH. The catalysed reaction is oxaloacetate + H(+) = pyruvate + CO2. The protein is NAD-dependent malic enzyme of Vibrio campbellii (strain ATCC BAA-1116).